The sequence spans 188 residues: MEGVESKEREVMVAKPVAVVGVCDLLLRLLAFTVTLVAAIVIAVDKQTKLVPIQLSDSFPPLNVPLTAKWHQMSAFVYFLVTNAIACTYAAMSLLLALVNRGKSKGLWTLIAVLDTFMVALLFSGNGAAAAVGILGYKGNSHVNWNKVCNVFGKFCDQMAASIGVSLIGSLAFLLLVVIPVVRLHRRT.

The Cytoplasmic segment spans residues 1 to 23 (MEGVESKEREVMVAKPVAVVGVC). A helical membrane pass occupies residues 24 to 44 (DLLLRLLAFTVTLVAAIVIAV). The Extracellular portion of the chain corresponds to 45–78 (DKQTKLVPIQLSDSFPPLNVPLTAKWHQMSAFVY). Residues 79 to 99 (FLVTNAIACTYAAMSLLLALV) traverse the membrane as a helical segment. Topologically, residues 100–116 (NRGKSKGLWTLIAVLDT) are cytoplasmic. The chain crosses the membrane as a helical span at residues 117–137 (FMVALLFSGNGAAAAVGILGY). At 138-161 (KGNSHVNWNKVCNVFGKFCDQMAA) the chain is on the extracellular side. The chain crosses the membrane as a helical span at residues 162–182 (SIGVSLIGSLAFLLLVVIPVV). At 183–188 (RLHRRT) the chain is on the cytoplasmic side.

Belongs to the Casparian strip membrane proteins (CASP) family. As to quaternary structure, homodimer and heterodimers.

It localises to the cell membrane. This is CASP-like protein 1E1 from Glycine max (Soybean).